Here is a 140-residue protein sequence, read N- to C-terminus: RxLR effector protein Avh23 (140 aa).

The first 21 residues, 1–21 (MRLTYFLTVIVVATLHAGGTA), serve as a signal peptide directing secretion. The RxLR-dEER signature appears at 54–72 (RMLRKVKEDTVSKKDHEER). The stretch at 100-113 (QGAFQRQNAFVNRD) is one ADA2-binding IR1 repeat. Residues 114 to 127 (QGAFQRQNAFVKRA) form an ADA2-binding IR2 repeat.

This sequence belongs to the RxLR effector family. Interacts with host histone acetyl transferase SAGA complex subunit ADA2.

It is found in the secreted. It localises to the host nucleus. Its subcellular location is the host cytoplasm. Its function is as follows. Effector that suppresses plant defense responses during the early stages of pathogen infection. Suppresses cell death induced by effectors and PAMPs in plant hosts. Acts as a modulator of histone acetyltransferase (HAT) in plants. Avh23 binds to the ADA2 subunit of the HAT complex SAGA and disrupts its assembly by interfering with the association of ADA2 with the catalytic subunit GCN5. As such, Avh23 suppresses H3K9 acetylation mediated by the ADA2/GCN5 module and increases plant susceptibility. The chain is RxLR effector protein Avh23 from Phytophthora sojae (Soybean stem and root rot agent).